Reading from the N-terminus, the 160-residue chain is SsrA-binding protein (160 aa).

The protein belongs to the SmpB family.

The protein localises to the cytoplasm. Functionally, required for rescue of stalled ribosomes mediated by trans-translation. Binds to transfer-messenger RNA (tmRNA), required for stable association of tmRNA with ribosomes. tmRNA and SmpB together mimic tRNA shape, replacing the anticodon stem-loop with SmpB. tmRNA is encoded by the ssrA gene; the 2 termini fold to resemble tRNA(Ala) and it encodes a 'tag peptide', a short internal open reading frame. During trans-translation Ala-aminoacylated tmRNA acts like a tRNA, entering the A-site of stalled ribosomes, displacing the stalled mRNA. The ribosome then switches to translate the ORF on the tmRNA; the nascent peptide is terminated with the 'tag peptide' encoded by the tmRNA and targeted for degradation. The ribosome is freed to recommence translation, which seems to be the essential function of trans-translation. The polypeptide is SsrA-binding protein (Zymomonas mobilis subsp. mobilis (strain ATCC 31821 / ZM4 / CP4)).